Reading from the N-terminus, the 115-residue chain is NADH-ubiquinone oxidoreductase chain 3 (115 aa).

3 helical membrane passes run Leu3–Trp23, Phe55–Leu75, and Leu84–Tyr104.

This sequence belongs to the complex I subunit 3 family. Core subunit of respiratory chain NADH dehydrogenase (Complex I) which is composed of 45 different subunits. Interacts with TMEM186. Interacts with TMEM242.

The protein localises to the mitochondrion inner membrane. The enzyme catalyses a ubiquinone + NADH + 5 H(+)(in) = a ubiquinol + NAD(+) + 4 H(+)(out). Its function is as follows. Core subunit of the mitochondrial membrane respiratory chain NADH dehydrogenase (Complex I) which catalyzes electron transfer from NADH through the respiratory chain, using ubiquinone as an electron acceptor. Essential for the catalytic activity of complex I. The sequence is that of NADH-ubiquinone oxidoreductase chain 3 from Ailurus fulgens (Himalayan red panda).